The primary structure comprises 241 residues: 2-C-methyl-D-erythritol 4-phosphate cytidylyltransferase (241 aa).

This sequence belongs to the IspD/TarI cytidylyltransferase family. IspD subfamily.

It carries out the reaction 2-C-methyl-D-erythritol 4-phosphate + CTP + H(+) = 4-CDP-2-C-methyl-D-erythritol + diphosphate. It functions in the pathway isoprenoid biosynthesis; isopentenyl diphosphate biosynthesis via DXP pathway; isopentenyl diphosphate from 1-deoxy-D-xylulose 5-phosphate: step 2/6. Functionally, catalyzes the formation of 4-diphosphocytidyl-2-C-methyl-D-erythritol from CTP and 2-C-methyl-D-erythritol 4-phosphate (MEP). The protein is 2-C-methyl-D-erythritol 4-phosphate cytidylyltransferase of Shewanella denitrificans (strain OS217 / ATCC BAA-1090 / DSM 15013).